We begin with the raw amino-acid sequence, 234 residues long: Superoxide dismutase [Mn], mitochondrial (234 aa).

The transit peptide at 1-34 directs the protein to the mitochondrion; sequence MFSIRSSSRVLLKASSATTRATLNAAASKTFTRS. Mn(2+) is bound by residues His-60, His-108, Asp-198, and His-202.

The protein belongs to the iron/manganese superoxide dismutase family. Homotetramer. Requires Mn(2+) as cofactor.

The protein localises to the mitochondrion matrix. It carries out the reaction 2 superoxide + 2 H(+) = H2O2 + O2. Functionally, destroys superoxide anion radicals which are normally produced within the cells and which are toxic to biological systems. The chain is Superoxide dismutase [Mn], mitochondrial (SOD2) from Candida albicans (Yeast).